The following is a 373-amino-acid chain: Mannitol-1-phosphate 5-dehydrogenase (373 aa).

Residue 3–14 (ALHFGAGNIGRG) participates in NAD(+) binding.

This sequence belongs to the mannitol dehydrogenase family.

It carries out the reaction D-mannitol 1-phosphate + NAD(+) = beta-D-fructose 6-phosphate + NADH + H(+). The chain is Mannitol-1-phosphate 5-dehydrogenase from Bacillus pumilus (strain SAFR-032).